The following is a 64-amino-acid chain: Large ribosomal subunit protein uL29 (64 aa).

Belongs to the universal ribosomal protein uL29 family.

The protein is Large ribosomal subunit protein uL29 of Cupriavidus necator (strain ATCC 17699 / DSM 428 / KCTC 22496 / NCIMB 10442 / H16 / Stanier 337) (Ralstonia eutropha).